We begin with the raw amino-acid sequence, 330 residues long: uncharacterized protein (330 aa).

This is an uncharacterized protein from Acanthamoeba polyphaga (Amoeba).